Here is a 118-residue protein sequence, read N- to C-terminus: Small ribosomal subunit protein uS13 (118 aa).

Positions 93-118 (RNLPVRGQNTKNNARTRKGPTRPLKR) are disordered. Positions 106 to 118 (ARTRKGPTRPLKR) are enriched in basic residues.

The protein belongs to the universal ribosomal protein uS13 family. Part of the 30S ribosomal subunit. Forms a loose heterodimer with protein S19. Forms two bridges to the 50S subunit in the 70S ribosome.

Located at the top of the head of the 30S subunit, it contacts several helices of the 16S rRNA. In the 70S ribosome it contacts the 23S rRNA (bridge B1a) and protein L5 of the 50S subunit (bridge B1b), connecting the 2 subunits; these bridges are implicated in subunit movement. Contacts the tRNAs in the A and P-sites. This Psychrobacter cryohalolentis (strain ATCC BAA-1226 / DSM 17306 / VKM B-2378 / K5) protein is Small ribosomal subunit protein uS13.